The chain runs to 149 residues: Calmodulin-5/6/7/8 (149 aa).

Alanine 2 bears the N-acetylalanine mark. EF-hand domains are found at residues aspartate 8–asparagine 43, proline 44–aspartate 79, aspartate 81–lysine 116, and leucine 117–lysine 149. Positions 21, 23, 25, 27, 32, 57, 59, 61, 63, 68, 94, 96, 98, and 105 each coordinate Ca(2+). Position 116 is an N6,N6,N6-trimethyllysine (lysine 116). The Ca(2+) site is built by aspartate 130, aspartate 132, aspartate 134, glutamine 136, and glutamate 141.

Belongs to the calmodulin family. As to expression, high expression of PCM5 and 8 in stolon tips and stems, moderate in roots, and low in leaves. Steady-state expression of PCM6 in all the tissues tested, except in the leaves where the expression is lower.

In terms of biological role, calmodulin mediates the control of a large number of enzymes, ion channels and other proteins by Ca(2+). Among the enzymes to be stimulated by the calmodulin-Ca(2+) complex are a number of protein kinases and phosphatases. The sequence is that of Calmodulin-5/6/7/8 (PCM5) from Solanum tuberosum (Potato).